The primary structure comprises 363 residues: 3-isopropylmalate dehydrogenase (363 aa).

78–91 (GPKWEHLPPAEQPE) serves as a coordination point for NAD(+). The substrate site is built by arginine 99, arginine 109, arginine 138, and aspartate 227. Mg(2+) contacts are provided by aspartate 227, aspartate 251, and aspartate 255. NAD(+) is bound at residue 285–297 (GSAPDIAGKGIAN).

The protein belongs to the isocitrate and isopropylmalate dehydrogenases family. LeuB type 1 subfamily. Homodimer. Mg(2+) is required as a cofactor. Mn(2+) serves as cofactor.

It is found in the cytoplasm. It carries out the reaction (2R,3S)-3-isopropylmalate + NAD(+) = 4-methyl-2-oxopentanoate + CO2 + NADH. The protein operates within amino-acid biosynthesis; L-leucine biosynthesis; L-leucine from 3-methyl-2-oxobutanoate: step 3/4. Its function is as follows. Catalyzes the oxidation of 3-carboxy-2-hydroxy-4-methylpentanoate (3-isopropylmalate) to 3-carboxy-4-methyl-2-oxopentanoate. The product decarboxylates to 4-methyl-2 oxopentanoate. The chain is 3-isopropylmalate dehydrogenase from Photorhabdus laumondii subsp. laumondii (strain DSM 15139 / CIP 105565 / TT01) (Photorhabdus luminescens subsp. laumondii).